The chain runs to 162 residues: Large ribosomal subunit protein uL10 (162 aa).

The protein belongs to the universal ribosomal protein uL10 family. Part of the ribosomal stalk of the 50S ribosomal subunit. The N-terminus interacts with L11 and the large rRNA to form the base of the stalk. The C-terminus forms an elongated spine to which L12 dimers bind in a sequential fashion forming a multimeric L10(L12)X complex.

Its function is as follows. Forms part of the ribosomal stalk, playing a central role in the interaction of the ribosome with GTP-bound translation factors. In Mycoplasma genitalium (strain ATCC 33530 / DSM 19775 / NCTC 10195 / G37) (Mycoplasmoides genitalium), this protein is Large ribosomal subunit protein uL10 (rplJ).